Here is a 270-residue protein sequence, read N- to C-terminus: MPELPEVETTLKGVSPYLKGFIIEKIVVRNPKLRWEVSKELSTFKHVKILNLTRRAKYLIIHTEQGYIIGHLGMSGSVRIVPHDNPVNKHDHFDIVMNNGKLLRYNDARRFGAWLWTNNLSEFHLFFKLGPEPLSETFNSTYLFKKSRQKSTALKTFLMDNSVVVGVGNIYANEILFLCGLHPQKIAKTLTKKQAEQLVFTIKQVLNEAIEQGGTTLKDFLQPDGRPGYFAQKLLVYGNKDKPCPRCGTKIKSIIIGQRNSFFCPQCQKK.

Pro-2 (schiff-base intermediate with DNA) is an active-site residue. The active-site Proton donor is Glu-3. Lys-57 functions as the Proton donor; for beta-elimination activity in the catalytic mechanism. Residues His-90, Arg-109, and Lys-150 each contribute to the DNA site. The FPG-type zinc-finger motif lies at 235 to 269 (LVYGNKDKPCPRCGTKIKSIIIGQRNSFFCPQCQK). The active-site Proton donor; for delta-elimination activity is Arg-259.

It belongs to the FPG family. As to quaternary structure, monomer. The cofactor is Zn(2+).

The catalysed reaction is Hydrolysis of DNA containing ring-opened 7-methylguanine residues, releasing 2,6-diamino-4-hydroxy-5-(N-methyl)formamidopyrimidine.. It carries out the reaction 2'-deoxyribonucleotide-(2'-deoxyribose 5'-phosphate)-2'-deoxyribonucleotide-DNA = a 3'-end 2'-deoxyribonucleotide-(2,3-dehydro-2,3-deoxyribose 5'-phosphate)-DNA + a 5'-end 5'-phospho-2'-deoxyribonucleoside-DNA + H(+). Functionally, involved in base excision repair of DNA damaged by oxidation or by mutagenic agents. Acts as a DNA glycosylase that recognizes and removes damaged bases. Has a preference for oxidized purines, such as 7,8-dihydro-8-oxoguanine (8-oxoG). Has AP (apurinic/apyrimidinic) lyase activity and introduces nicks in the DNA strand. Cleaves the DNA backbone by beta-delta elimination to generate a single-strand break at the site of the removed base with both 3'- and 5'-phosphates. This chain is Formamidopyrimidine-DNA glycosylase, found in Histophilus somni (strain 129Pt) (Haemophilus somnus).